The chain runs to 69 residues: ATP synthase F(0) complex subunit 8 (69 aa).

The helical transmembrane segment at 8–24 (TWLLTITLMILALFCIY) threads the bilayer. Residue Lys55 is modified to N6-acetyllysine; alternate. The residue at position 55 (Lys55) is an N6-succinyllysine; alternate. Lys58 bears the N6-acetyllysine mark.

The protein belongs to the ATPase protein 8 family. Component of the ATP synthase complex composed at least of ATP5F1A/subunit alpha, ATP5F1B/subunit beta, ATP5MC1/subunit c (homooctomer), MT-ATP6/subunit a, MT-ATP8/subunit 8, ATP5ME/subunit e, ATP5MF/subunit f, ATP5MG/subunit g, ATP5MK/subunit k, ATP5MJ/subunit j, ATP5F1C/subunit gamma, ATP5F1D/subunit delta, ATP5F1E/subunit epsilon, ATP5PF/subunit F6, ATP5PB/subunit b, ATP5PD/subunit d, ATP5PO/subunit OSCP. ATP synthase complex consists of a soluble F(1) head domain (subunits alpha(3) and beta(3)) - the catalytic core - and a membrane F(0) domain - the membrane proton channel (subunits c, a, 8, e, f, g, k and j). These two domains are linked by a central stalk (subunits gamma, delta, and epsilon) rotating inside the F1 region and a stationary peripheral stalk (subunits F6, b, d, and OSCP). Interacts with PRICKLE3.

Its subcellular location is the mitochondrion membrane. Functionally, subunit 8, of the mitochondrial membrane ATP synthase complex (F(1)F(0) ATP synthase or Complex V) that produces ATP from ADP in the presence of a proton gradient across the membrane which is generated by electron transport complexes of the respiratory chain. ATP synthase complex consist of a soluble F(1) head domain - the catalytic core - and a membrane F(1) domain - the membrane proton channel. These two domains are linked by a central stalk rotating inside the F(1) region and a stationary peripheral stalk. During catalysis, ATP synthesis in the catalytic domain of F(1) is coupled via a rotary mechanism of the central stalk subunits to proton translocation. In vivo, can only synthesize ATP although its ATP hydrolase activity can be activated artificially in vitro. Part of the complex F(0) domain. This Osphranter robustus (Wallaroo) protein is ATP synthase F(0) complex subunit 8.